A 268-amino-acid polypeptide reads, in one-letter code: Trypsin-like protease (268 aa).

An N-terminal signal peptide occupies residues 1-41; the sequence is MTHTTTIAAKRGGLALAKKAAAAGAVALAVASLQPVSAAHA. Residues 42-45 constitute a propeptide, activation peptide; the sequence is ADAR. The Peptidase S1 domain maps to 46-266; the sequence is VIGGKPAAQN…FAKDIAKAAS (221 aa). A disulfide bridge links Cys-67 with Cys-83. Residues His-82 and Asp-127 each act as charge relay system in the active site. Cystine bridges form between Cys-187-Cys-202 and Cys-213-Cys-242. Ser-217 (charge relay system) is an active-site residue.

Belongs to the peptidase S1 family.

Its function is as follows. Protease that shows preferential cleavage after Arg and Lys residues. The protein is Trypsin-like protease of Streptomyces glaucescens.